The primary structure comprises 164 residues: UPF0114 protein YqhA (164 aa).

Transmembrane regions (helical) follow at residues 15 to 35 (LLAPVYFGLSLALVALALKFF), 53 to 73 (LILVLLSLVDMTLVGGLLVMV), and 136 to 156 (LMWYVIIHLTFVLSAFVMGYL).

Belongs to the UPF0114 family.

The protein localises to the cell membrane. In Shigella dysenteriae serotype 1 (strain Sd197), this protein is UPF0114 protein YqhA.